A 627-amino-acid polypeptide reads, in one-letter code: Serine/threonine-protein phosphatase 2A 56 kDa regulatory subunit delta 2 isoform (627 aa).

Positions 1–37 (MKGLRSKFVKALSLKDEQGSHKNGHSKSHYISKNGSY) are disordered.

It belongs to the phosphatase 2A regulatory subunit B family. PP2A consists of a common heterodimeric core enzyme, composed of a 36 kDa catalytic subunit (subunit C) and a 65 kDa constant regulatory subunit (PR65 or subunit A), that associates with a variety of regulatory subunits. Proteins that associate with the core dimer include three families of regulatory subunits B (the R2/B/PR55/B55, R3/B''/PR72/PR130/PR59 and R5/B'/B56 families), the 48 kDa variable regulatory subunit, viral proteins, and cell signaling molecules.

It is found in the cytoplasm. It localises to the cell tip. The B regulatory subunit might modulate substrate selectivity and catalytic activity, and might also direct the localization of the catalytic enzyme to a particular subcellular compartment. Has a role in cell shape control and septum formation. This Schizosaccharomyces pombe (strain 972 / ATCC 24843) (Fission yeast) protein is Serine/threonine-protein phosphatase 2A 56 kDa regulatory subunit delta 2 isoform (par2).